A 430-amino-acid chain; its full sequence is Serine--tRNA ligase (430 aa).

Residue 235-237 (TSE) coordinates L-serine. 266–268 (RSE) is an ATP binding site. E289 is a binding site for L-serine. ATP is bound at residue 353-356 (EISS). An L-serine-binding site is contributed by S388.

It belongs to the class-II aminoacyl-tRNA synthetase family. Type-1 seryl-tRNA synthetase subfamily. In terms of assembly, homodimer. The tRNA molecule binds across the dimer.

It is found in the cytoplasm. It catalyses the reaction tRNA(Ser) + L-serine + ATP = L-seryl-tRNA(Ser) + AMP + diphosphate + H(+). The enzyme catalyses tRNA(Sec) + L-serine + ATP = L-seryl-tRNA(Sec) + AMP + diphosphate + H(+). Its pathway is aminoacyl-tRNA biosynthesis; selenocysteinyl-tRNA(Sec) biosynthesis; L-seryl-tRNA(Sec) from L-serine and tRNA(Sec): step 1/1. Functionally, catalyzes the attachment of serine to tRNA(Ser). Is also able to aminoacylate tRNA(Sec) with serine, to form the misacylated tRNA L-seryl-tRNA(Sec), which will be further converted into selenocysteinyl-tRNA(Sec). The sequence is that of Serine--tRNA ligase from Azoarcus sp. (strain BH72).